We begin with the raw amino-acid sequence, 312 residues long: Glyoxylate/hydroxypyruvate reductase A (312 aa).

Arg227 is an active-site residue. His275 serves as the catalytic Proton donor.

Belongs to the D-isomer specific 2-hydroxyacid dehydrogenase family. GhrA subfamily.

Its subcellular location is the cytoplasm. It carries out the reaction glycolate + NADP(+) = glyoxylate + NADPH + H(+). The catalysed reaction is (R)-glycerate + NAD(+) = 3-hydroxypyruvate + NADH + H(+). The enzyme catalyses (R)-glycerate + NADP(+) = 3-hydroxypyruvate + NADPH + H(+). Functionally, catalyzes the NADPH-dependent reduction of glyoxylate and hydroxypyruvate into glycolate and glycerate, respectively. This chain is Glyoxylate/hydroxypyruvate reductase A, found in Salmonella choleraesuis (strain SC-B67).